A 264-amino-acid polypeptide reads, in one-letter code: tRNA pseudouridine synthase A (264 aa).

Residue Asp-51 is the Nucleophile of the active site. Tyr-109 serves as a coordination point for substrate.

It belongs to the tRNA pseudouridine synthase TruA family. In terms of assembly, homodimer.

It carries out the reaction uridine(38/39/40) in tRNA = pseudouridine(38/39/40) in tRNA. Formation of pseudouridine at positions 38, 39 and 40 in the anticodon stem and loop of transfer RNAs. The chain is tRNA pseudouridine synthase A from Aromatoleum aromaticum (strain DSM 19018 / LMG 30748 / EbN1) (Azoarcus sp. (strain EbN1)).